Consider the following 462-residue polypeptide: MTEFDTIAAISTPMGEGAIAIVRLSGDEAVEIADRLFRSPTGKQLKDVPSHTIHYGHIVDPKSGRIVEEVMVSVMRAPKTFTREDVVEINCHGGFVSVNRVLQLVLANGARLAEPGEFTKRAFLNGRIDLSQAEAVIDLIRAKTDRAMNVALQQMEGRLSKLIRELRQTILETLAHVEVNIDYPEYDDVEEMTPRLLKEKAEYVRGQIEKLLSTATQGKILREGLATVIIGRPNVGKSSLLNALAHENRAIVTDIPGTTRDVIEEYVNVRGVPLRLIDTAGIRETEDIVERIGVERSRQMLKKADLILLVLNYHEPLTEEDERLFAMTEGMDVIVIVNKTDLPQNIDIERVKELAAGRPIVATSLLCERGIDELEKAIADLFFGGELEAGDLTYVSNSRHIALLEQAKKAIEDALSGIDVGMPVDLVQIDLRRAWELLGEIVGDTVHESLIDQLFAQFCLGK.

Residues arginine 23, glutamate 88, and arginine 127 each coordinate (6S)-5-formyl-5,6,7,8-tetrahydrofolate. A TrmE-type G domain is found at 224–383 (GLATVIIGRP…LEKAIADLFF (160 aa)). Asparagine 234 contributes to the K(+) binding site. Residues 234 to 239 (NVGKSS), 253 to 259 (TDIPGTT), and 278 to 281 (DTAG) contribute to the GTP site. Mg(2+) is bound at residue serine 238. K(+) is bound by residues threonine 253, isoleucine 255, and threonine 258. Threonine 259 lines the Mg(2+) pocket. Residue lysine 462 participates in (6S)-5-formyl-5,6,7,8-tetrahydrofolate binding.

It belongs to the TRAFAC class TrmE-Era-EngA-EngB-Septin-like GTPase superfamily. TrmE GTPase family. Homodimer. Heterotetramer of two MnmE and two MnmG subunits. Requires K(+) as cofactor.

The protein resides in the cytoplasm. Exhibits a very high intrinsic GTPase hydrolysis rate. Involved in the addition of a carboxymethylaminomethyl (cmnm) group at the wobble position (U34) of certain tRNAs, forming tRNA-cmnm(5)s(2)U34. In Geobacillus thermodenitrificans (strain NG80-2), this protein is tRNA modification GTPase MnmE.